We begin with the raw amino-acid sequence, 284 residues long: MKQKVVSIGDINVANDLPFVLFGGMNVLESRDLAMRICEHYVTVTQKLGIPYVFKASFDKANRSSIHSYRGPGLEEGMKIFQELKQTFGVKIITDVHEPSQAQPVADVVDVIQLPAFLARQTDLVEAMAKTGAVINVKKPQFVSPGQMGNIVDKFKEGGNDKVILCDRGANFGYDNLVVDMLGFSVMKKVSGNSPVIFDVTHALQCRDPFGAASGGRRAQVTELARAGMAVGLAGLFIEAHPDPEHAKCDGPSALPLAKLEPFLKQMKAIDELVKGFEELDTSK.

It belongs to the KdsA family.

It is found in the cytoplasm. It carries out the reaction D-arabinose 5-phosphate + phosphoenolpyruvate + H2O = 3-deoxy-alpha-D-manno-2-octulosonate-8-phosphate + phosphate. It participates in carbohydrate biosynthesis; 3-deoxy-D-manno-octulosonate biosynthesis; 3-deoxy-D-manno-octulosonate from D-ribulose 5-phosphate: step 2/3. It functions in the pathway bacterial outer membrane biogenesis; lipopolysaccharide biosynthesis. In Escherichia fergusonii (strain ATCC 35469 / DSM 13698 / CCUG 18766 / IAM 14443 / JCM 21226 / LMG 7866 / NBRC 102419 / NCTC 12128 / CDC 0568-73), this protein is 2-dehydro-3-deoxyphosphooctonate aldolase.